A 343-amino-acid chain; its full sequence is Small ribosomal subunit biogenesis GTPase RsgA (343 aa).

The 160-residue stretch at 116–275 (RGQLKPVAAN…LIDSPGIREF (160 aa)) folds into the CP-type G domain. GTP contacts are provided by residues 163 to 166 (NKAD) and 217 to 225 (GQSGVGKSS). 4 residues coordinate Zn(2+): cysteine 299, cysteine 304, histidine 306, and cysteine 312.

Belongs to the TRAFAC class YlqF/YawG GTPase family. RsgA subfamily. Monomer. Associates with 30S ribosomal subunit, binds 16S rRNA. Zn(2+) serves as cofactor.

Its subcellular location is the cytoplasm. One of several proteins that assist in the late maturation steps of the functional core of the 30S ribosomal subunit. Helps release RbfA from mature subunits. May play a role in the assembly of ribosomal proteins into the subunit. Circularly permuted GTPase that catalyzes slow GTP hydrolysis, GTPase activity is stimulated by the 30S ribosomal subunit. This is Small ribosomal subunit biogenesis GTPase RsgA from Pseudomonas savastanoi pv. phaseolicola (strain 1448A / Race 6) (Pseudomonas syringae pv. phaseolicola (strain 1448A / Race 6)).